The following is a 227-amino-acid chain: uncharacterized protein (227 aa).

Transmembrane regions (helical) follow at residues 7–24 (FVYA…VTWA) and 135–157 (VVVI…LMCL).

This sequence belongs to the TMEM9 family.

The protein resides in the membrane. This is an uncharacterized protein from Drosophila melanogaster (Fruit fly).